The sequence spans 187 residues: Ribosome-recycling factor (187 aa).

This sequence belongs to the RRF family.

Its subcellular location is the cytoplasm. Responsible for the release of ribosomes from messenger RNA at the termination of protein biosynthesis. May increase the efficiency of translation by recycling ribosomes from one round of translation to another. This is Ribosome-recycling factor from Orientia tsutsugamushi (strain Boryong) (Rickettsia tsutsugamushi).